Consider the following 475-residue polypeptide: Ribulose bisphosphate carboxylase large chain (475 aa).

A propeptide spanning residues 1-2 (MS) is cleaved from the precursor. Proline 3 carries the N-acetylproline modification. Lysine 14 carries the post-translational modification N6,N6,N6-trimethyllysine. Positions 123 and 173 each coordinate substrate. The active-site Proton acceptor is the lysine 175. Lysine 177 is a substrate binding site. Mg(2+) is bound by residues lysine 201, aspartate 203, and glutamate 204. Lysine 201 carries the post-translational modification N6-carboxylysine. The active-site Proton acceptor is histidine 294. Substrate-binding residues include arginine 295, histidine 327, and serine 379.

This sequence belongs to the RuBisCO large chain family. Type I subfamily. Heterohexadecamer of 8 large chains and 8 small chains; disulfide-linked. The disulfide link is formed within the large subunit homodimers. Mg(2+) serves as cofactor. Post-translationally, the disulfide bond which can form in the large chain dimeric partners within the hexadecamer appears to be associated with oxidative stress and protein turnover.

Its subcellular location is the plastid. It localises to the chloroplast. It catalyses the reaction 2 (2R)-3-phosphoglycerate + 2 H(+) = D-ribulose 1,5-bisphosphate + CO2 + H2O. It carries out the reaction D-ribulose 1,5-bisphosphate + O2 = 2-phosphoglycolate + (2R)-3-phosphoglycerate + 2 H(+). Its function is as follows. RuBisCO catalyzes two reactions: the carboxylation of D-ribulose 1,5-bisphosphate, the primary event in carbon dioxide fixation, as well as the oxidative fragmentation of the pentose substrate in the photorespiration process. Both reactions occur simultaneously and in competition at the same active site. This is Ribulose bisphosphate carboxylase large chain (rbcL) from Marchantia polymorpha (Common liverwort).